The sequence spans 914 residues: MSDQFNSREARRKANSKSSPSPKKGKKRKKGGLFKKTLFTLLILFVLGVVGGAVTFAVMVSDAPSLDESKLKTPYSSTIYDKNGKEIAEVGAEKRTYVSIDEIPDVVKEAFIATEDARFYEHHGIDPVRIGGALVANFKDGFGAEGGSTITQQVVKNSLLSHQKTLKRKVQEVWLSIQLERNYSKDEILEMYLNRIYFSPRAYGIGKAAEEFFGVTDLSKLTVEQAATLAGMPQSPTAYNPVKNPDKAEKRRNIVLSLMKKQGFISDSQYNKAKKVAVKDEGVVSQKEYEKASTNKYSAFVEEVMKEIDEKSDVDPSADGLKIYTTLDTKAQDKLDELMDGDTVGFTEGMQGGVTLLDTKNGEVRAIGAGRNQPVGGFNYATQTKAQPGSTIKPILDYGPVIENKKWSTYEQIDDSAYTYSNGKPIRDWDRKYLGPISMRYALAQSRNIPALKAFQAVGKDTAVDFANGLGLGLTKDNVTEAYSIGGFGGNDGVSPLTMAGAYSAFGNNGTYNEPHFVKSIEFNDGTKLDLTPKSKSAMSDYTAFMITDMLKTAVKTGTGQLAQVPGVEVAGKTGTTNFDDNEVKRYNIASGGARDSWFVGYTPQYTAAVWTGMGENEAGKKSLSAEEQKVAKRIFAQLIADVDDGSGSFEKPDSVVEATVEKGSNPAKLAGPNTPSDKKLTEYFVKGTAPSTVSKTYEKEEKEETAKLSGLNVKYDKDNQSLTLSWNYDGDATFAVKQSVDGGSYSEIQNSSAKEAVISGVQPGSVYKFEVTAVSDDGKSTASTSYEVPKAEDDEDKKDQQQTDDEKQDDEKTQDDTQTDDSQKDDGQTDQDQTDDSTNDQDKKQDNTNTNPSDNNNQDQSNDNDNDNSNNQDTSDGDSNSGKNDSTGSDTNKNKTDTSNKTQTNSSSIEKTN.

The interval 1 to 29 is disordered; it reads MSDQFNSREARRKANSKSSPSPKKGKKRK. Over 1-37 the chain is Cytoplasmic; the sequence is MSDQFNSREARRKANSKSSPSPKKGKKRKKGGLFKKT. Residues 38-58 traverse the membrane as a helical; Signal-anchor for type II membrane protein segment; that stretch reads LFTLLILFVLGVVGGAVTFAV. The Extracellular segment spans residues 59-914; the sequence is MVSDAPSLDE…TNSSSIEKTN (856 aa). A transglycosylase region spans residues 77-246; sequence STIYDKNGKE…TAYNPVKNPD (170 aa). Catalysis depends on E115, which acts as the Proton donor; for transglycosylase activity. Residues 329–662 form a transpeptidase region; that stretch reads TKAQDKLDEL…PDSVVEATVE (334 aa). S390 functions as the Acyl-ester intermediate; for transpeptidase activity in the catalytic mechanism. A Fibronectin type-III domain is found at 708–795; it reads KLSGLNVKYD…SYEVPKAEDD (88 aa). A disordered region spans residues 773-914; the sequence is TAVSDDGKST…TNSSSIEKTN (142 aa). Basic and acidic residues predominate over residues 798–828; sequence KKDQQQTDDEKQDDEKTQDDTQTDDSQKDDG. A compositionally biased stretch (acidic residues) spans 829–840; it reads QTDQDQTDDSTN. Composition is skewed to low complexity over residues 848 to 892 and 900 to 914; these read NTNT…GSDT and SNKT…EKTN.

In the N-terminal section; belongs to the glycosyltransferase 51 family. The protein in the C-terminal section; belongs to the transpeptidase family. The product expressed from the translation of the ponA gene appears as two bands on a gel (1A and 1B), but the specific amino acid sequence of each protein is unknown. Post-translationally, the N-terminus is blocked.

Its subcellular location is the cell membrane. The protein resides in the forespore inner membrane. It carries out the reaction [GlcNAc-(1-&gt;4)-Mur2Ac(oyl-L-Ala-gamma-D-Glu-L-Lys-D-Ala-D-Ala)](n)-di-trans,octa-cis-undecaprenyl diphosphate + beta-D-GlcNAc-(1-&gt;4)-Mur2Ac(oyl-L-Ala-gamma-D-Glu-L-Lys-D-Ala-D-Ala)-di-trans,octa-cis-undecaprenyl diphosphate = [GlcNAc-(1-&gt;4)-Mur2Ac(oyl-L-Ala-gamma-D-Glu-L-Lys-D-Ala-D-Ala)](n+1)-di-trans,octa-cis-undecaprenyl diphosphate + di-trans,octa-cis-undecaprenyl diphosphate + H(+). The enzyme catalyses Preferential cleavage: (Ac)2-L-Lys-D-Ala-|-D-Ala. Also transpeptidation of peptidyl-alanyl moieties that are N-acyl substituents of D-alanine.. The protein operates within cell wall biogenesis; peptidoglycan biosynthesis. Its function is as follows. Cell wall formation. Synthesis of cross-linked peptidoglycan from the lipid intermediates. The enzyme has a penicillin-insensitive transglycosylase N-terminal domain (formation of linear glycan strands) and a penicillin-sensitive transpeptidase C-terminal domain (cross-linking of the peptide subunits). Required for vegetative growth. Has a partially redundant function with PBP-2A (pbpA) during spore outgrowth. The sequence is that of Penicillin-binding protein 1A/1B (ponA) from Bacillus subtilis (strain 168).